The sequence spans 154 residues: MAFKIDDFTIQEDQVKIAKDVFKRFDKRGQEKISTTDLGPAFRALNLTVKPDTLKEWADQVDDDATGFIDFNGFLICYGKKLQEDQDERDLRDAFRVLDKNKRGEIDVEDLRWILKGLGDDLTEEEIDDMIRDTDTDGSGFVDFDEFYKLMTSE.

EF-hand domains are found at residues 13–48, 49–84, 86–121, and 122–154; these read DQVK…LNLT, VKPD…KLQE, QDER…LGDD, and LTEE…MTSE. Asp62, Asp64, Thr66, Asp99, Asn101, Glu105, Asp110, Asp135, Asp137, Ser139, and Glu146 together coordinate Ca(2+).

Its subcellular location is the tegument membrane. Calcium-binding protein. This chain is 20 kDa calcium-binding protein (SM20), found in Schistosoma mansoni (Blood fluke).